A 222-amino-acid chain; its full sequence is L-serine dehydratase, beta chain (222 aa).

Residues 150 to 222 (TILLEYPEQR…RFTTAKYVEV (73 aa)) form the ACT domain.

This sequence belongs to the iron-sulfur dependent L-serine dehydratase family. Heterooctamer of four alpha chains and four beta chains. It depends on [4Fe-4S] cluster as a cofactor.

The enzyme catalyses L-serine = pyruvate + NH4(+). The protein operates within carbohydrate biosynthesis; gluconeogenesis. The sequence is that of L-serine dehydratase, beta chain (sdhB) from Peptoniphilus asaccharolyticus (Peptostreptococcus asaccharolyticus).